A 211-amino-acid chain; its full sequence is Redox-sensing transcriptional repressor Rex (211 aa).

Residues 17–56 (LYYRFVSSLKSKGIDRVNSKAISDALQIDSATIRRDFSYF) constitute a DNA-binding region (H-T-H motif). 91–96 (GVGNLG) is an NAD(+) binding site.

The protein belongs to the transcriptional regulatory Rex family. As to quaternary structure, homodimer.

It localises to the cytoplasm. Functionally, modulates transcription in response to changes in cellular NADH/NAD(+) redox state. The protein is Redox-sensing transcriptional repressor Rex of Staphylococcus aureus (strain Mu3 / ATCC 700698).